Consider the following 251-residue polypeptide: Imidazole glycerol phosphate synthase subunit HisF (251 aa).

Active-site residues include Asp-11 and Asp-130.

It belongs to the HisA/HisF family. Heterodimer of HisH and HisF.

It is found in the cytoplasm. It carries out the reaction 5-[(5-phospho-1-deoxy-D-ribulos-1-ylimino)methylamino]-1-(5-phospho-beta-D-ribosyl)imidazole-4-carboxamide + L-glutamine = D-erythro-1-(imidazol-4-yl)glycerol 3-phosphate + 5-amino-1-(5-phospho-beta-D-ribosyl)imidazole-4-carboxamide + L-glutamate + H(+). It functions in the pathway amino-acid biosynthesis; L-histidine biosynthesis; L-histidine from 5-phospho-alpha-D-ribose 1-diphosphate: step 5/9. In terms of biological role, IGPS catalyzes the conversion of PRFAR and glutamine to IGP, AICAR and glutamate. The HisF subunit catalyzes the cyclization activity that produces IGP and AICAR from PRFAR using the ammonia provided by the HisH subunit. This chain is Imidazole glycerol phosphate synthase subunit HisF, found in Phocaeicola vulgatus (strain ATCC 8482 / DSM 1447 / JCM 5826 / CCUG 4940 / NBRC 14291 / NCTC 11154) (Bacteroides vulgatus).